Here is a 279-residue protein sequence, read N- to C-terminus: 4-diphosphocytidyl-2-C-methyl-D-erythritol kinase (279 aa).

Lys-9 is a catalytic residue. 93-103 contacts ATP; it reads PMGAGLGGGSS. Residue Asp-135 is part of the active site.

It belongs to the GHMP kinase family. IspE subfamily.

It catalyses the reaction 4-CDP-2-C-methyl-D-erythritol + ATP = 4-CDP-2-C-methyl-D-erythritol 2-phosphate + ADP + H(+). It functions in the pathway isoprenoid biosynthesis; isopentenyl diphosphate biosynthesis via DXP pathway; isopentenyl diphosphate from 1-deoxy-D-xylulose 5-phosphate: step 3/6. In terms of biological role, catalyzes the phosphorylation of the position 2 hydroxy group of 4-diphosphocytidyl-2C-methyl-D-erythritol. The chain is 4-diphosphocytidyl-2-C-methyl-D-erythritol kinase from Acinetobacter baylyi (strain ATCC 33305 / BD413 / ADP1).